Reading from the N-terminus, the 333-residue chain is Tetraacyldisaccharide 4'-kinase (333 aa).

60 to 67 (TVGGTGKT) serves as a coordination point for ATP.

It belongs to the LpxK family.

It carries out the reaction a lipid A disaccharide + ATP = a lipid IVA + ADP + H(+). The protein operates within glycolipid biosynthesis; lipid IV(A) biosynthesis; lipid IV(A) from (3R)-3-hydroxytetradecanoyl-[acyl-carrier-protein] and UDP-N-acetyl-alpha-D-glucosamine: step 6/6. Functionally, transfers the gamma-phosphate of ATP to the 4'-position of a tetraacyldisaccharide 1-phosphate intermediate (termed DS-1-P) to form tetraacyldisaccharide 1,4'-bis-phosphate (lipid IVA). The chain is Tetraacyldisaccharide 4'-kinase from Azotobacter vinelandii (strain DJ / ATCC BAA-1303).